The primary structure comprises 449 residues: MSVLTPREIVSELDKYIIGQEQAKRMVAVALRNRWRRQQLEPAIRDEVAPKNIIMMGPTGVGKTEIARRLARLSSSPFLKVEATKFTEVGYVGRDVESMIRDLMEISVNLVREEERDSVKTRAEAAAEERLLDLLLPSSPAVNTSFDTPQTPAGGAENTRNKLRTLWREGRLDHREVEMEVEMQSGPQMDVMTMPGMEDIGSQFKDMFSKAFPPKRKRRRMKVGDAYAILLQEESERLIDHEKVIELARERAEQTGIIFLDEIDKIASSQQGGKTADISREGVQRDLLPIVEGSAVNTKYGIIHTDHILFIGAGAFHYSKPSDLIPELQGRFPLRVELTALGSKEFLRILTEPKNALTVQYKALLATEGVQIEYTEDALEAVADFAQEANQETENIGARRLYTIMEKILADLSFEAPDKSGERIVIDREYVRQHLADITANRDLTRYIL.

Residues Ile-18, 60–65 (GVGKTE), Asp-261, Glu-327, and Arg-399 contribute to the ATP site.

It belongs to the ClpX chaperone family. HslU subfamily. In terms of assembly, a double ring-shaped homohexamer of HslV is capped on each side by a ring-shaped HslU homohexamer. The assembly of the HslU/HslV complex is dependent on binding of ATP.

It localises to the cytoplasm. Its function is as follows. ATPase subunit of a proteasome-like degradation complex; this subunit has chaperone activity. The binding of ATP and its subsequent hydrolysis by HslU are essential for unfolding of protein substrates subsequently hydrolyzed by HslV. HslU recognizes the N-terminal part of its protein substrates and unfolds these before they are guided to HslV for hydrolysis. In Oleidesulfovibrio alaskensis (strain ATCC BAA-1058 / DSM 17464 / G20) (Desulfovibrio alaskensis), this protein is ATP-dependent protease ATPase subunit HslU.